Reading from the N-terminus, the 242-residue chain is Large ribosomal subunit protein uL1 (242 aa).

This sequence belongs to the universal ribosomal protein uL1 family. In terms of assembly, part of the 50S ribosomal subunit.

Its function is as follows. Binds directly to 23S rRNA. The L1 stalk is quite mobile in the ribosome, and is involved in E site tRNA release. Protein L1 is also a translational repressor protein, it controls the translation of the L11 operon by binding to its mRNA. This Persephonella marina (strain DSM 14350 / EX-H1) protein is Large ribosomal subunit protein uL1.